The following is an 88-amino-acid chain: Small ribosomal subunit protein uS15 (88 aa).

The span at 1–20 (MLATEKKQELIDQYKRHEGD) shows a compositional bias: basic and acidic residues. Positions 1–21 (MLATEKKQELIDQYKRHEGDT) are disordered.

Belongs to the universal ribosomal protein uS15 family. In terms of assembly, part of the 30S ribosomal subunit. Forms a bridge to the 50S subunit in the 70S ribosome, contacting the 23S rRNA.

One of the primary rRNA binding proteins, it binds directly to 16S rRNA where it helps nucleate assembly of the platform of the 30S subunit by binding and bridging several RNA helices of the 16S rRNA. Functionally, forms an intersubunit bridge (bridge B4) with the 23S rRNA of the 50S subunit in the ribosome. This Syntrophotalea carbinolica (strain DSM 2380 / NBRC 103641 / GraBd1) (Pelobacter carbinolicus) protein is Small ribosomal subunit protein uS15.